We begin with the raw amino-acid sequence, 418 residues long: Glutamyl-tRNA(Gln) amidotransferase subunit D (418 aa).

Positions 74 to 405 (KNISILSTGG…EEAKELMPKN (332 aa)) constitute an Asparaginase/glutaminase domain. Catalysis depends on residues Thr-84, Thr-160, Asp-161, and Lys-237.

It belongs to the asparaginase 1 family. GatD subfamily. Heterodimer of GatD and GatE.

The enzyme catalyses L-glutamyl-tRNA(Gln) + L-glutamine + ATP + H2O = L-glutaminyl-tRNA(Gln) + L-glutamate + ADP + phosphate + H(+). In terms of biological role, allows the formation of correctly charged Gln-tRNA(Gln) through the transamidation of misacylated Glu-tRNA(Gln) in organisms which lack glutaminyl-tRNA synthetase. The reaction takes place in the presence of glutamine and ATP through an activated gamma-phospho-Glu-tRNA(Gln). The GatDE system is specific for glutamate and does not act on aspartate. The chain is Glutamyl-tRNA(Gln) amidotransferase subunit D from Methanococcus maripaludis (strain C6 / ATCC BAA-1332).